The chain runs to 639 residues: MGKIIGIDLGTTNSCVSVFEGNEPVVIANSEGKRTTPSIVAFVDGGERKVGDPAKRQAITNPTRTIFSIKRFMGENWDQVQKEIARVPYKVVKGDNNTPRVDIDGRLYTPQEISAMILQKMKKTAEDYLGQEVTEAVITVPAYFSDSQRQATKEAGQIAGLEVKRIVNEPTAAALAYGLDKAHKDMKIAVFDLGGGTFDISILEFGGGVFEVLSTNGDTHLGGDDFDQVIIDWLVQEFKNDEGADLTQDPMAMQRLKEAAEKAKIELSSSTSTEINLPYIMPVGGVPKHLVKTLTRAKFESLAHNLIQACLEPCKKAMQDAGLSNSDIDEVILVGGSSRIPAVQKLVEDFFGKTPSKGVNPDEVVAVGAAVQGAVLTDEIKGVVLLDVTPLSMGIETLGGVMTKLIDANTTIPARKSETFSTAADNQTEVTIHVLQGERPMAAQNKSIGQFNLTGIAPARRGVPQIEVTFDIDANGILKVSAKDKATGKEQAIRIEASSGLSKEEIEKMKAEAEANAEADKKEREKIDKLNQADSLIFQTETQLKELGDKLPADKKAPIEAALQKLKDAHKAQDMTTIDSAMAELNTAFQAASAEMYAQSGAQGGAQAGPDMNAGQSNAGQNNGKQDDNVQDADFEEVK.

T197 bears the Phosphothreonine; by autocatalysis mark. A disordered region spans residues 600 to 639 (SGAQGGAQAGPDMNAGQSNAGQNNGKQDDNVQDADFEEVK). Residues 613–624 (NAGQSNAGQNNG) show a composition bias toward low complexity. A compositionally biased stretch (acidic residues) spans 629–639 (NVQDADFEEVK).

Belongs to the heat shock protein 70 family.

Its function is as follows. Acts as a chaperone. This chain is Chaperone protein DnaK, found in Bacteroides fragilis (strain ATCC 25285 / DSM 2151 / CCUG 4856 / JCM 11019 / LMG 10263 / NCTC 9343 / Onslow / VPI 2553 / EN-2).